A 291-amino-acid polypeptide reads, in one-letter code: 3-hydroxy-5-phosphonooxypentane-2,4-dione thiolase (291 aa).

Lysine 203 serves as the catalytic Schiff-base intermediate with substrate.

The protein belongs to the DeoC/FbaB aldolase family. In terms of assembly, homodecamer.

It localises to the cytoplasm. The enzyme catalyses dihydroxyacetone phosphate + acetyl-CoA = 3-hydroxy-2,4-dioxopentyl phosphate + CoA. Functionally, involved in the degradation of phospho-AI-2, thereby terminating induction of the lsr operon and closing the AI-2 signaling cycle. Catalyzes the transfer of an acetyl moiety from 3-hydroxy-5-phosphonooxypentane-2,4-dione to CoA to form glycerone phosphate and acetyl-CoA. This Yersinia enterocolitica serotype O:8 / biotype 1B (strain NCTC 13174 / 8081) protein is 3-hydroxy-5-phosphonooxypentane-2,4-dione thiolase.